Here is a 584-residue protein sequence, read N- to C-terminus: Mitochondrial ribonuclease P catalytic subunit (584 aa).

The transit peptide at 1–43 directs the protein to the mitochondrion; sequence MTFYLSGFRSIPKLWKSNPYFELGPATSSTPFFLCAIGNQQRW. The 237-residue stretch at 339–575 folds into the PRORP domain; the sequence is IQKSGQCSGC…SCEVPTKWLC (237 aa). Residues cysteine 345 and cysteine 348 each contribute to the Zn(2+) site. Mg(2+) contacts are provided by aspartate 406, aspartate 475, aspartate 476, and aspartate 496. The Zn(2+) site is built by histidine 554 and cysteine 575.

It belongs to the PPR family. P subfamily. Catalytic component of mitochondrial ribonuclease P, a complex composed of TRMT10C/MRPP1, HSD17B10/MRPP2 and PRORP/MRPP3. Requires Mg(2+) as cofactor. The cofactor is Mn(2+). Post-translationally, degraded by LONP1 following mitochondrial unfolded protein response, probably leading to inhibit translation in mitochondrion. As to expression, detected, after the onset of hearing, in the organ of Corti around the afferent and efferent synapses of the inner hair cells and the efferent synapses of the outer hair cells.

The protein localises to the mitochondrion. It catalyses the reaction Endonucleolytic cleavage of RNA, removing 5'-extranucleotides from tRNA precursor.. Its function is as follows. Catalytic ribonuclease component of mitochondrial ribonuclease P, a complex composed of TRMT10C/MRPP1, HSD17B10/MRPP2 and PRORP, which cleaves tRNA molecules in their 5'-ends. The presence of TRMT10C/MRPP1, HSD17B10/MRPP2 is required to catalyze tRNA molecules in their 5'-ends. The chain is Mitochondrial ribonuclease P catalytic subunit (Prorp) from Mus musculus (Mouse).